Consider the following 449-residue polypeptide: Na(+)/H(+) antiporter NhaA (449 aa).

A run of 12 helical transmembrane segments spans residues 30-50 (IFLI…WAGA), 69-89 (FGLT…FLVA), 112-132 (LLAA…LNLG), 138-158 (GWGI…GLLG), 168-188 (FLIA…ALFY), 192-212 (LSWI…LMNW), 218-238 (LIWY…SGIH), 241-261 (IAGV…SKIL), 312-332 (SLVD…NAGV), 348-368 (LGIL…FTLI), 386-406 (IIGI…ITNL), and 419-439 (ISIL…LLLT).

The protein belongs to the NhaA Na(+)/H(+) (TC 2.A.33) antiporter family.

It localises to the cell inner membrane. The catalysed reaction is Na(+)(in) + 2 H(+)(out) = Na(+)(out) + 2 H(+)(in). Na(+)/H(+) antiporter that extrudes sodium in exchange for external protons. The sequence is that of Na(+)/H(+) antiporter NhaA from Christiangramia forsetii (strain DSM 17595 / CGMCC 1.15422 / KT0803) (Gramella forsetii).